We begin with the raw amino-acid sequence, 218 residues long: Claudin-3 (218 aa).

The Cytoplasmic segment spans residues 1 to 8 (MSMGLEIA). Residues 9-29 (GTSLAVLGWLSTIVCCALPMW) form a helical membrane-spanning segment. At 30–80 (RVTAFIGSSIITAQITWEGLWMNCVVQSTGQMQCKVYDSLLALPQDLQAAR) the chain is on the extracellular side. A helical membrane pass occupies residues 81-101 (ALIVVSILLAAFGLLVALVGA). Residues 102–115 (QCTNCVQDDTAKAK) are Cytoplasmic-facing. A helical transmembrane segment spans residues 116–136 (ITIVAGVLFLLAALLTLVPVS). The Extracellular portion of the chain corresponds to 137–159 (WSANTIIRDFYNPLVPDAQKREM). Residues 160 to 180 (GAGLYVGWAAAALQLLGGALL) traverse the membrane as a helical segment. The Cytoplasmic portion of the chain corresponds to 181-218 (CCSCPPRDKKYAPTKIVYSAPRSAGPGTSTAYDRKDYV). Phosphotyrosine is present on Tyr198. Phosphoserine occurs at positions 199 and 209. Residues 217–218 (YV) form an interactions with TJP1, TJP2 and TJP3 region.

It belongs to the claudin family. As to quaternary structure, can form homo- and heteropolymers with other CLDN. Homopolymers interact with CLDN1 and CLDN2 homopolymers. Interacts in cis (within the same plasma membrane) with CLDN19. Directly interacts with TJP1/ZO-1, TJP2/ZO-2 and TJP3/ZO-3.

The protein resides in the cell junction. It localises to the tight junction. Its subcellular location is the cell membrane. Its function is as follows. Plays a major role in tight junction-specific obliteration of the intercellular space, through calcium-independent cell-adhesion activity. The protein is Claudin-3 (CLDN3) of Canis lupus familiaris (Dog).